Reading from the N-terminus, the 264-residue chain is N-carbamoylsarcosine amidase (264 aa).

Cys177 functions as the Nucleophile in the catalytic mechanism. A disordered region spans residues 240–264 (TVPKTLSDPQPEVEAPADPVFAEQH).

Homotetramer. Sulfate serves as cofactor.

It carries out the reaction N-carbamoylsarcosine + H2O + 2 H(+) = sarcosine + NH4(+) + CO2. The protein operates within amine and polyamine degradation; creatinine degradation; sarcosine from creatinine: step 3/3. This chain is N-carbamoylsarcosine amidase, found in Arthrobacter sp.